Consider the following 335-residue polypeptide: Large ribosomal subunit protein uL10 (335 aa).

The interval 304–335 (GAAAPVEEAPVEEKKEEKKEEAAPAAGLGMLF) is disordered. Basic and acidic residues predominate over residues 314-325 (VEEKKEEKKEEA).

Belongs to the universal ribosomal protein uL10 family. As to quaternary structure, part of the 50S ribosomal subunit. Forms part of the ribosomal stalk which helps the ribosome interact with GTP-bound translation factors. Forms a heptameric L10(L12)2(L12)2(L12)2 complex, where L10 forms an elongated spine to which the L12 dimers bind in a sequential fashion.

Its function is as follows. Forms part of the ribosomal stalk, playing a central role in the interaction of the ribosome with GTP-bound translation factors. In Methanococcus maripaludis (strain C6 / ATCC BAA-1332), this protein is Large ribosomal subunit protein uL10.